A 197-amino-acid polypeptide reads, in one-letter code: Small ribosomal subunit protein uS4 (197 aa).

The region spanning 94–158 (RRLDNVIYRF…LKKYLYDYKN (65 aa)) is the S4 RNA-binding domain.

It belongs to the universal ribosomal protein uS4 family. As to quaternary structure, part of the 30S ribosomal subunit. Contacts protein S5. The interaction surface between S4 and S5 is involved in control of translational fidelity.

Functionally, one of the primary rRNA binding proteins, it binds directly to 16S rRNA where it nucleates assembly of the body of the 30S subunit. With S5 and S12 plays an important role in translational accuracy. The polypeptide is Small ribosomal subunit protein uS4 (rpsD) (Carsonella ruddii (strain PV)).